A 697-amino-acid polypeptide reads, in one-letter code: PHD finger protein At1g33420 (697 aa).

A PHD-type zinc finger spans residues Lys-603–Leu-653.

The protein resides in the nucleus. The protein is PHD finger protein At1g33420 of Arabidopsis thaliana (Mouse-ear cress).